The following is a 280-amino-acid chain: Hydroxyethylthiazole kinase (280 aa).

A substrate-binding site is contributed by Met50. Residues Lys125 and Thr178 each contribute to the ATP site. Position 205 (Gly205) interacts with substrate.

The protein belongs to the Thz kinase family. Mg(2+) serves as cofactor.

The catalysed reaction is 5-(2-hydroxyethyl)-4-methylthiazole + ATP = 4-methyl-5-(2-phosphooxyethyl)-thiazole + ADP + H(+). Its pathway is cofactor biosynthesis; thiamine diphosphate biosynthesis; 4-methyl-5-(2-phosphoethyl)-thiazole from 5-(2-hydroxyethyl)-4-methylthiazole: step 1/1. Its function is as follows. Catalyzes the phosphorylation of the hydroxyl group of 4-methyl-5-beta-hydroxyethylthiazole (THZ). The protein is Hydroxyethylthiazole kinase of Lacticaseibacillus casei (strain BL23) (Lactobacillus casei).